Reading from the N-terminus, the 611-residue chain is Protein decapping 5 (611 aa).

The 84-residue stretch at Lys9 to Pro92 folds into the Sm domain. 6 disordered regions span residues His111–Leu153, Gly183–Leu238, Ser264–Pro301, Glu318–Lys362, Gln396–Ser455, and Phe519–Thr611. Composition is skewed to polar residues over residues Pro117–Pro140 and Asn203–Phe214. The span at Ser264–Ser281 shows a compositional bias: low complexity. 3 stretches are compositionally biased toward polar residues: residues Glu318–Ser330, Gln396–Ala413, and Ala424–Asn437. Positions Tyr441–Gly453 are enriched in basic residues. The region spanning Gly453–Leu489 is the DFDF domain. An FFD box motif is present at residues Pro512 to Thr527. Over residues Ile528–Thr547 the composition is skewed to basic and acidic residues. The TFG box motif lies at Asn534–Ser554. The span at Gly559–Arg604 shows a compositional bias: gly residues.

The protein belongs to the LSM14 family. In terms of assembly, homodimer. Component of the decapping complex. Interacts with DCP1 and DCP2.

The protein resides in the cytoplasm. It is found in the P-body. Its function is as follows. As a component of the decapping complex, involved in the degradation of mRNAs. Promotes P-body formation. Translational repressor. The sequence is that of Protein decapping 5 (DCP5) from Arabidopsis thaliana (Mouse-ear cress).